A 174-amino-acid chain; its full sequence is Crossover junction endodeoxyribonuclease RuvC (174 aa).

Residues D8, E67, and D139 contribute to the active site. Mg(2+) is bound by residues D8, E67, and D139.

The protein belongs to the RuvC family. Homodimer which binds Holliday junction (HJ) DNA. The HJ becomes 2-fold symmetrical on binding to RuvC with unstacked arms; it has a different conformation from HJ DNA in complex with RuvA. In the full resolvosome a probable DNA-RuvA(4)-RuvB(12)-RuvC(2) complex forms which resolves the HJ. Requires Mg(2+) as cofactor.

The protein resides in the cytoplasm. The enzyme catalyses Endonucleolytic cleavage at a junction such as a reciprocal single-stranded crossover between two homologous DNA duplexes (Holliday junction).. Functionally, the RuvA-RuvB-RuvC complex processes Holliday junction (HJ) DNA during genetic recombination and DNA repair. Endonuclease that resolves HJ intermediates. Cleaves cruciform DNA by making single-stranded nicks across the HJ at symmetrical positions within the homologous arms, yielding a 5'-phosphate and a 3'-hydroxyl group; requires a central core of homology in the junction. The consensus cleavage sequence is 5'-(A/T)TT(C/G)-3'. Cleavage occurs on the 3'-side of the TT dinucleotide at the point of strand exchange. HJ branch migration catalyzed by RuvA-RuvB allows RuvC to scan DNA until it finds its consensus sequence, where it cleaves and resolves the cruciform DNA. The sequence is that of Crossover junction endodeoxyribonuclease RuvC from Pseudomonas putida (strain ATCC 700007 / DSM 6899 / JCM 31910 / BCRC 17059 / LMG 24140 / F1).